A 260-amino-acid chain; its full sequence is Dehydrin ERD10 (260 aa).

3 disordered regions span residues 1–187, 197–216, and 240–260; these read MAEE…EEEK, KLPG…TTPL, and KLPG…KVSD. Position 2 is an N-acetylalanine (alanine 2). A compositionally biased stretch (basic and acidic residues) spans 26–44; the sequence is EIKERGMFDFLKKKEEVKP. Residue serine 61 is modified to Phosphoserine. 5 stretches are compositionally biased toward basic and acidic residues: residues 67 to 102, 130 to 140, 148 to 162, 176 to 187, and 197 to 207; these read VAKH…DKLH, IVEGDHVKTVE, DRIK…KPGG, SVEDHKPEEEEK, and KLPGHSKKPED. Tandem repeats lie at residues 184–204 and 227–247. Positions 184–247 are 2 X 21 AA repeats, Lys-rich; it reads EEEKKGFMDK…KEKLPGYHAK (64 aa).

The protein belongs to the plant dehydrin family. As to expression, in stems, cauline leaves, roots and flowers. Low levels found in maturing seeds. Absent in dry seeds.

This chain is Dehydrin ERD10 (ERD10), found in Arabidopsis thaliana (Mouse-ear cress).